The following is a 2894-amino-acid chain: Bifunctional DNA-directed RNA polymerase subunit beta-beta' (2894 aa).

The DNA-directed RNA polymerase subunit beta stretch occupies residues 1–1378 (MANFTKLKNR…DVNIYGDEQD (1378 aa)). Residues 1385 to 2894 (PIAIKEDERP…QEEYEEDEEE (1510 aa)) form a DNA-directed RNA polymerase subunit beta' region. Zn(2+) is bound by residues Cys1450, Cys1452, Cys1465, and Cys1468. Residues Asp1849, Asp1851, and Asp1853 each contribute to the Mg(2+) site. Zn(2+) contacts are provided by Cys2179, Cys2253, Cys2260, and Cys2263.

The protein in the N-terminal section; belongs to the RNA polymerase beta chain family. This sequence in the C-terminal section; belongs to the RNA polymerase beta' chain family. The RNAP catalytic core consists of 2 alpha, 1 beta/beta' and 1 omega subunit. When a sigma factor is associated with the core the holoenzyme is formed, which can initiate transcription. Requires Mg(2+) as cofactor. The cofactor is Zn(2+).

It catalyses the reaction RNA(n) + a ribonucleoside 5'-triphosphate = RNA(n+1) + diphosphate. DNA-dependent RNA polymerase catalyzes the transcription of DNA into RNA using the four ribonucleoside triphosphates as substrates. The sequence is that of Bifunctional DNA-directed RNA polymerase subunit beta-beta' (rpoBC) from Helicobacter hepaticus (strain ATCC 51449 / 3B1).